Reading from the N-terminus, the 600-residue chain is uncharacterized protein (600 aa).

4Fe-4S ferredoxin-type domains follow at residues 14 to 44 and 53 to 82; these read RLAIIDYDRCQPKKCSMECMKYCPGVRMGEK and GKPVISEVLCSGCGICVKRCPFKAISIIGL. ABC transporter domains are found at residues 77–318 and 348–563; these read ISII…YLYG and LLSY…LKEM. ATP contacts are provided by residues 117-124 and 380-387; these read GQNGIGKS and GPNGIGKT. Residues 569 to 594 are compositionally biased toward basic and acidic residues; the sequence is RDPETGRPRANKEGSQRDIMQKEKGE. Residues 569-600 are disordered; it reads RDPETGRPRANKEGSQRDIMQKEKGEYYYVDE.

This sequence belongs to the ABC transporter superfamily.

This is an uncharacterized protein from Methanocaldococcus jannaschii (strain ATCC 43067 / DSM 2661 / JAL-1 / JCM 10045 / NBRC 100440) (Methanococcus jannaschii).